The sequence spans 1697 residues: UDP-sugar-dependent glycosyltransferase 52 (1697 aa).

2 disordered regions span residues 20–40 (HSDS…NYEN) and 142–166 (STDL…LMIP). The PH domain occupies 234-332 (DYVLENYLYK…WYHEINRMQK (99 aa)). Disordered stretches follow at residues 573 to 645 (FRSK…TTHE) and 707 to 756 (PLDK…KQSQ). 2 stretches are compositionally biased toward low complexity: residues 584 to 628 (QNSQ…SSSA) and 711 to 722 (QQQQQQQQQQQQ). GRAM domains lie at 658–793 (STFH…TKER) and 881–948 (IKIK…KKYS). Residues 739-749 (TDSDTDSESDF) are compositionally biased toward acidic residues. Disordered regions lie at residues 1011–1047 (SPSI…IHST), 1062–1085 (DGEN…SNSF), 1110–1130 (SAQQ…STTT), and 1466–1488 (EHNN…SNKS). 4 stretches are compositionally biased toward low complexity: residues 1026-1047 (PPSS…IHST), 1065-1084 (NNSN…KSNS), 1112-1130 (QQQQ…STTT), and 1469-1479 (NNNNNNNNNNN). The segment at 1622–1685 (SSAPNSCMGC…VCDKCFNDLQ (64 aa)) adopts an FYVE-type zinc-finger fold. The Zn(2+) site is built by Cys-1628, Cys-1631, Cys-1647, Cys-1650, Cys-1655, Cys-1658, Cys-1677, and Cys-1680.

Belongs to the glycosyltransferase 28 family.

The enzyme catalyses a sterol + UDP-alpha-D-glucose = a sterol 3-beta-D-glucoside + UDP + H(+). Functionally, involved in the biosynthesis of sterol glucoside. Can use different sterols such as cholesterol, sitosterol, and ergosterol as sugar acceptors. In Dictyostelium discoideum (Social amoeba), this protein is UDP-sugar-dependent glycosyltransferase 52 (ugt52).